A 928-amino-acid polypeptide reads, in one-letter code: Periplasmic nitrate reductase (928 aa).

Residues 1-33 (MAFSRREFLKSAAAASAASAVGMSVPSQLLAQA) constitute a signal peptide (tat-type signal). A 4Fe-4S Mo/W bis-MGD-type domain is found at 40–96 (WRWDKSVCRFCGTGCGIMVATKNDQIVAVKGDPAAPVNRGLNCIKGYFNAKIMYGAD). [4Fe-4S] cluster is bound by residues C47, C50, C54, and C82. Residues K84, Q152, N177, C181, 214-221 (WGANMAEM), 265-267 (QTD), M422, Q426, N532, 557-558 (SD), K580, D607, and 818-827 (TGRVLEHWHS) contribute to the Mo-bis(molybdopterin guanine dinucleotide) site. W894 provides a ligand contact to substrate. 2 residues coordinate Mo-bis(molybdopterin guanine dinucleotide): N902 and K919.

This sequence belongs to the prokaryotic molybdopterin-containing oxidoreductase family. NasA/NapA/NarB subfamily. Component of the periplasmic nitrate reductase NapAB complex composed of NapA and NapB. It depends on [4Fe-4S] cluster as a cofactor. Mo-bis(molybdopterin guanine dinucleotide) is required as a cofactor. Post-translationally, predicted to be exported by the Tat system. The position of the signal peptide cleavage has not been experimentally proven.

The protein localises to the periplasm. It catalyses the reaction 2 Fe(II)-[cytochrome] + nitrate + 2 H(+) = 2 Fe(III)-[cytochrome] + nitrite + H2O. Functionally, catalytic subunit of the periplasmic nitrate reductase complex NapAB. Receives electrons from NapB and catalyzes the reduction of nitrate to nitrite. This is Periplasmic nitrate reductase from Wolinella succinogenes (strain ATCC 29543 / DSM 1740 / CCUG 13145 / JCM 31913 / LMG 7466 / NCTC 11488 / FDC 602W) (Vibrio succinogenes).